A 424-amino-acid polypeptide reads, in one-letter code: 5-methylthioadenosine/S-adenosylhomocysteine deaminase (424 aa).

Zn(2+) is bound by residues His60 and His62. Positions 89 and 181 each coordinate substrate. Residue His208 coordinates Zn(2+). 2 residues coordinate substrate: Glu211 and Asp296. Asp296 provides a ligand contact to Zn(2+).

It belongs to the metallo-dependent hydrolases superfamily. MTA/SAH deaminase family. Zn(2+) serves as cofactor.

It catalyses the reaction S-adenosyl-L-homocysteine + H2O + H(+) = S-inosyl-L-homocysteine + NH4(+). It carries out the reaction S-methyl-5'-thioadenosine + H2O + H(+) = S-methyl-5'-thioinosine + NH4(+). Functionally, catalyzes the deamination of 5-methylthioadenosine and S-adenosyl-L-homocysteine into 5-methylthioinosine and S-inosyl-L-homocysteine, respectively. Is also able to deaminate adenosine. This is 5-methylthioadenosine/S-adenosylhomocysteine deaminase from Thermococcus onnurineus (strain NA1).